A 117-amino-acid chain; its full sequence is Type II secretion system protein I (117 aa).

Positions 1–6 (MKSKRG) are cleaved as a propeptide — leader sequence. F7 is subject to N-methylphenylalanine. The chain crosses the membrane as a helical span at residues 7-27 (FTLLEVLVALAIFATAAISVI).

It belongs to the GSP I family. As to quaternary structure, type II secretion is composed of four main components: the outer membrane complex, the inner membrane complex, the cytoplasmic secretion ATPase and the periplasm-spanning pseudopilus. Interacts with core component EpsG. Post-translationally, cleaved by prepilin peptidase. In terms of processing, methylated by prepilin peptidase at the amino group of the N-terminal phenylalanine once the leader sequence is cleaved by prepilin peptidase.

The protein localises to the cell inner membrane. In terms of biological role, component of the type II secretion system required for the energy-dependent secretion of extracellular factors such as proteases and toxins from the periplasm. Part of the pseudopilus tip complex that is critical for the recognition and binding of secretion substrates. The sequence is that of Type II secretion system protein I (epsI) from Vibrio cholerae serotype O1 (strain ATCC 39315 / El Tor Inaba N16961).